The sequence spans 314 residues: tRNA pseudouridine synthase B (314 aa).

H43 contacts substrate. The Nucleophile role is filled by D48. Positions 76, 179, and 200 each coordinate substrate.

This sequence belongs to the pseudouridine synthase TruB family. Type 1 subfamily.

It catalyses the reaction uridine(55) in tRNA = pseudouridine(55) in tRNA. Its function is as follows. Responsible for synthesis of pseudouridine from uracil-55 in the psi GC loop of transfer RNAs. In Salmonella arizonae (strain ATCC BAA-731 / CDC346-86 / RSK2980), this protein is tRNA pseudouridine synthase B.